A 158-amino-acid polypeptide reads, in one-letter code: uncharacterized protein (158 aa).

The FPG-type zinc finger occupies arginine 109–threonine 143.

This is an uncharacterized protein from Mycobacterium tuberculosis (strain ATCC 25618 / H37Rv).